A 40-amino-acid chain; its full sequence is Adenylate kinase (40 aa).

10 to 15 (GAGKGT) is a binding site for ATP. Residues 30 to 40 (STGDMFIKAIK) form an NMP region. Position 31 (Thr-31) interacts with AMP.

This sequence belongs to the adenylate kinase family. Monomer.

It localises to the cytoplasm. The enzyme catalyses AMP + ATP = 2 ADP. It functions in the pathway purine metabolism; AMP biosynthesis via salvage pathway; AMP from ADP: step 1/1. Its function is as follows. Catalyzes the reversible transfer of the terminal phosphate group between ATP and AMP. Plays an important role in cellular energy homeostasis and in adenine nucleotide metabolism. The protein is Adenylate kinase (adk) of Staphylococcus carnosus.